The chain runs to 375 residues: MESNRDEAERCVRIAKAAIEAGDKEKAKRFLSKAERLYPSSEARALLQAFEKNDTAGNGPQSAKMAKGTEQPKAEKDSNASASSDTGKGHTQDQLDGVQRIKKCKTYYEVLGVSTDAGEEDLKKAYRKLALKFHPDKNHAPGATEAFKKIGNAYAVLSNPEKRKQYDLTGSEDQMQNNHRNGGFDYHRGFEADITPEDLFNMFFGGGFPSGSVHTFSNGRARYSHHQHHHHSGHDREDERADGGFSMFIQLMPIIVLILVSLLSQFMVSNPPYSLYPRSGQATKRVTENLQIAYYVSKDFQSEYSGILLQKLEKNIEEDYVANVRNNCWRERQQRSDLMHAAKVYRDERLKVKAESISMENCKELNRLTSLFRGG.

Residues 1–242 (MESNRDEAER…GHDREDERAD (242 aa)) are Cytoplasmic-facing. The disordered stretch occupies residues 48–95 (QAFEKNDTAGNGPQSAKMAKGTEQPKAEKDSNASASSDTGKGHTQDQL). In terms of domain architecture, J spans 106–170 (TYYEVLGVST…EKRKQYDLTG (65 aa)). A helical transmembrane segment spans residues 243-263 (GGFSMFIQLMPIIVLILVSLL). Residues 264 to 375 (SQFMVSNPPY…NRLTSLFRGG (112 aa)) lie on the Lumenal side of the membrane.

This sequence belongs to the DnaJ family. DNAJB12/DNAJB14 subfamily.

The protein localises to the endoplasmic reticulum membrane. Its function is as follows. Acts as a co-chaperone with HSPA8/Hsc70; required to promote protein folding and trafficking, prevent aggregation of client proteins, and promote unfolded proteins to endoplasmic reticulum-associated degradation (ERAD) pathway. Acts by determining hspa8/Hsc70's ATPase and polypeptide-binding activities. Can also act independently of hspa8/Hsc70: together with dnajb12, acts as a chaperone that promotes maturation of potassium channels by stabilizing nascent channel subunits and assembling them into tetramers. While stabilization of nascent channel proteins is dependent on hspa8/Hsc70, the process of oligomerization of channel subunits is independent of hspa8/Hsc70. This chain is DnaJ homolog subfamily B member 14 (dnajb14), found in Xenopus tropicalis (Western clawed frog).